Here is a 486-residue protein sequence, read N- to C-terminus: Flavin-dependent monooxygenase pboD (486 aa).

Residues Asp51, Gly65, and Arg124 each coordinate FAD. Arg203 is an active-site residue. 2 residues coordinate FAD: Asp344 and Gly357.

This sequence belongs to the paxM FAD-dependent monooxygenase family. It depends on FAD as a cofactor.

It functions in the pathway secondary metabolite biosynthesis. Flavin-dependent monooxygenase; part of the gene cluster that mediates the biosynthesis of protubonine B, a hydroxylated and diacetylated cyclo-L-Trp-L-Leu derivative. Within the pathway, pboD catalyzes the hydroxylation at C-3 of the indole ring of cyclo-L-Trp-L-Leu and subsequent formation of the pyrrolidine ring, eading to the production of protubonine D. PboD is also able to accept other cyclodipeptides (CDPs) as substrates, including cyclo-L-Trp-L-Trp, cyclo-L-Trp-L-Tyr, cyclo-L-Trp-L-Phe, cyclo-L-Trp-L-Met, cyclo-L-Trp-L-Ala, cyclo-L-Trp-L-Pro and cyclo-L-Trp-Gly. Assays with cyclo-L-Trp-L-Trp, cyclo-L-Trp-L-Tyr, cyclo-L-Trp-L-Phe show similar or even slightly higher conversion yields, compared with that of the natural substrate cyclo-L-Trp-L-Leu, whereas cyclo-L-Trp-L-Pro and cyclo-L-Trp-Gly are accepted by PboD but only with conversion yields of 10 and 4%, respectively. Cyclo-L-Trp-L-His is not accepted as a substrate. The first step of the protubonine B synthesis is performed by the nonribosomal peptide synthetase pboA that catalyzes the formation of cyclo-L-Trp-L-Leu by condensing L-Leu with L-Trp. The flavin-dependent monooxygenase pboD is responsible for hydroxylation at C-3 of the indole ring and subsequent formation of the pyrrolidine ring, leadind to protubonine D. Protubonine D is further diacetylated by two acetyltransferases, pboB and pboC, to form the final product protubonine B via protubonine C. The polypeptide is Flavin-dependent monooxygenase pboD (Aspergillus ustus).